We begin with the raw amino-acid sequence, 342 residues long: Dihydroorotase (342 aa).

Zn(2+) is bound by residues histidine 13 and histidine 15. Substrate-binding positions include 15-17 and asparagine 41; that span reads HLR. Positions 98, 135, and 173 each coordinate Zn(2+). The residue at position 98 (lysine 98) is an N6-carboxylysine. Substrate is bound at residue histidine 135. Residue leucine 218 participates in substrate binding. Aspartate 246 lines the Zn(2+) pocket. Residue aspartate 246 is part of the active site. Histidine 250 and alanine 262 together coordinate substrate.

This sequence belongs to the metallo-dependent hydrolases superfamily. DHOase family. Class II DHOase subfamily. Homodimer. Requires Zn(2+) as cofactor.

The enzyme catalyses (S)-dihydroorotate + H2O = N-carbamoyl-L-aspartate + H(+). It functions in the pathway pyrimidine metabolism; UMP biosynthesis via de novo pathway; (S)-dihydroorotate from bicarbonate: step 3/3. Functionally, catalyzes the reversible cyclization of carbamoyl aspartate to dihydroorotate. The chain is Dihydroorotase from Aliivibrio fischeri (strain ATCC 700601 / ES114) (Vibrio fischeri).